A 77-amino-acid chain; its full sequence is Acyl carrier protein (77 aa).

The 76-residue stretch at 2–77 folds into the Carrier domain; the sequence is SDVADRVKKI…DAVKFISEAS (76 aa). Residue Ser37 is modified to O-(pantetheine 4'-phosphoryl)serine.

Belongs to the acyl carrier protein (ACP) family. Post-translationally, 4'-phosphopantetheine is transferred from CoA to a specific serine of apo-ACP by AcpS. This modification is essential for activity because fatty acids are bound in thioester linkage to the sulfhydryl of the prosthetic group.

It localises to the cytoplasm. The protein operates within lipid metabolism; fatty acid biosynthesis. Carrier of the growing fatty acid chain in fatty acid biosynthesis. This chain is Acyl carrier protein, found in Ruegeria sp. (strain TM1040) (Silicibacter sp.).